Here is a 507-residue protein sequence, read N- to C-terminus: Protein DETOXIFICATION 41 (507 aa).

The Cytoplasmic segment spans residues 1 to 62 (MSSTETYEPL…KLLWTLSGAS (62 aa)). A helical transmembrane segment spans residues 63–83 (IVVSVLNYMLSFVTVMFTGHL). At 84-92 (GSLQLAGAS) the chain is on the vacuolar side. A helical membrane pass occupies residues 93–113 (IATVGIQGLAYGIMLGMASAV). The Cytoplasmic portion of the chain corresponds to 114–137 (QTVCGQAYGARQYSSMGIICQRAM). A helical transmembrane segment spans residues 138–158 (VLHLAAAVFLTFLYWYSGPIL). At 159 to 170 (KTMGQSVAIAHE) the chain is on the vacuolar side. The helical transmembrane segment at 171-191 (GQIFARGMIPQIYAFALACPM) threads the bilayer. The Cytoplasmic portion of the chain corresponds to 192-202 (QRFLQAQNIVN). The chain crosses the membrane as a helical span at residues 203 to 223 (PLAYMSLGVFLLHTLLTWLVT). Position 224 (N224) is a topological domain, vacuolar. Residues 225–245 (VLDFGLLGAALILSFSWWLLV) form a helical membrane-spanning segment. Topologically, residues 246–283 (AVNGMYILMSPNCKETWTGFSTRAFRGIWPYFKLTVAS) are cytoplasmic. The chain crosses the membrane as a helical span at residues 284–304 (AVMLCLEIWYNQGLVIISGLL). Residues 305–312 (SNPTISLD) lie on the Vacuolar side of the membrane. The chain crosses the membrane as a helical span at residues 313-333 (AISICMYYLNWDMQFMLGLSA). Residues 334 to 355 (AISVRVSNELGAGNPRVAMLSV) lie on the Cytoplasmic side of the membrane. A helical transmembrane segment spans residues 356 to 376 (VVVNITTVLISSVLCVIVLVF). Topologically, residues 377–389 (RVGLSKAFTSDAE) are vacuolar. The chain crosses the membrane as a helical span at residues 390–410 (VIAAVSDLFPLLAVSIFLNGI). Residues 411–425 (QPILSGVAIGSGWQA) are Cytoplasmic-facing. Residues 426-446 (VVAYVNLVTYYVIGLPIGCVL) form a helical membrane-spanning segment. At 447 to 453 (GFKTSLG) the chain is on the vacuolar side. Residues 454–474 (VAGIWWGMIAGVILQTLTLIV) traverse the membrane as a helical segment. Over 475 to 507 (LTLKTNWTSEVENAAQRVKTSATENQEMANAGV) the chain is Cytoplasmic.

The protein belongs to the multi antimicrobial extrusion (MATE) (TC 2.A.66.1) family. Expressed in reproductive tissues, from buds to siliques. Restricted to the endothelium layer of the ovule and the seed coat.

The protein localises to the vacuole membrane. It functions in the pathway secondary metabolite biosynthesis; flavonoid biosynthesis. Acts as a flavonoid/H(+)-antiporter that control the vacuolar sequestration of flavonoids in the seed coat endothelium. Could transport the anthocyanin cyanidin-3-O-glucoside and epicatechin 3'-O-glucoside in vitro. The polypeptide is Protein DETOXIFICATION 41 (Arabidopsis thaliana (Mouse-ear cress)).